The following is a 545-amino-acid chain: Chaperonin GroEL (545 aa).

ATP is bound by residues 30–33 (TLGP), Lys51, 87–91 (DGTTT), Gly415, and Asp495.

Belongs to the chaperonin (HSP60) family. Forms a cylinder of 14 subunits composed of two heptameric rings stacked back-to-back. Interacts with the co-chaperonin GroES.

Its subcellular location is the cytoplasm. The enzyme catalyses ATP + H2O + a folded polypeptide = ADP + phosphate + an unfolded polypeptide.. Its function is as follows. Together with its co-chaperonin GroES, plays an essential role in assisting protein folding. The GroEL-GroES system forms a nano-cage that allows encapsulation of the non-native substrate proteins and provides a physical environment optimized to promote and accelerate protein folding. In Shewanella denitrificans (strain OS217 / ATCC BAA-1090 / DSM 15013), this protein is Chaperonin GroEL.